A 280-amino-acid polypeptide reads, in one-letter code: F420-dependent methylenetetrahydromethanopterin dehydrogenase (280 aa).

It belongs to the MTD family.

The enzyme catalyses 5,10-methylenetetrahydromethanopterin + oxidized coenzyme F420-(gamma-L-Glu)(n) + 2 H(+) = 5,10-methenyl-5,6,7,8-tetrahydromethanopterin + reduced coenzyme F420-(gamma-L-Glu)(n). Its pathway is one-carbon metabolism; methanogenesis from CO(2); 5,10-methylene-5,6,7,8-tetrahydromethanopterin from 5,10-methenyl-5,6,7,8-tetrahydromethanopterin (coenzyme F420 route): step 1/1. In terms of biological role, catalyzes the reversible reduction of methenyl-H(4)MPT(+) to methylene-H(4)MPT. This chain is F420-dependent methylenetetrahydromethanopterin dehydrogenase, found in Methanocorpusculum labreanum (strain ATCC 43576 / DSM 4855 / Z).